A 233-amino-acid polypeptide reads, in one-letter code: Large ribosomal subunit protein uL1 (233 aa).

The protein belongs to the universal ribosomal protein uL1 family. In terms of assembly, part of the 50S ribosomal subunit.

Its function is as follows. Binds directly to 23S rRNA. The L1 stalk is quite mobile in the ribosome, and is involved in E site tRNA release. In terms of biological role, protein L1 is also a translational repressor protein, it controls the translation of the L11 operon by binding to its mRNA. In Rhodospirillum rubrum (strain ATCC 11170 / ATH 1.1.1 / DSM 467 / LMG 4362 / NCIMB 8255 / S1), this protein is Large ribosomal subunit protein uL1.